Here is an 890-residue protein sequence, read N- to C-terminus: DNA mismatch repair protein MutS (890 aa).

607–614 (GPNMSGKS) contributes to the ATP binding site. The disordered stretch occupies residues 832–851 (ESQLSFFGGEQSSKKQDKPL).

It belongs to the DNA mismatch repair MutS family.

This protein is involved in the repair of mismatches in DNA. It is possible that it carries out the mismatch recognition step. This protein has a weak ATPase activity. In Bacillus cereus (strain B4264), this protein is DNA mismatch repair protein MutS.